We begin with the raw amino-acid sequence, 308 residues long: Aspartate carbamoyltransferase catalytic subunit (308 aa).

Residues arginine 55 and threonine 56 each coordinate carbamoyl phosphate. Residue lysine 83 participates in L-aspartate binding. Residues arginine 105, histidine 133, and glutamine 136 each coordinate carbamoyl phosphate. 2 residues coordinate L-aspartate: arginine 166 and arginine 223. The carbamoyl phosphate site is built by glycine 264 and proline 265.

It belongs to the aspartate/ornithine carbamoyltransferase superfamily. ATCase family. In terms of assembly, heterododecamer (2C3:3R2) of six catalytic PyrB chains organized as two trimers (C3), and six regulatory PyrI chains organized as three dimers (R2).

The enzyme catalyses carbamoyl phosphate + L-aspartate = N-carbamoyl-L-aspartate + phosphate + H(+). It functions in the pathway pyrimidine metabolism; UMP biosynthesis via de novo pathway; (S)-dihydroorotate from bicarbonate: step 2/3. Catalyzes the condensation of carbamoyl phosphate and aspartate to form carbamoyl aspartate and inorganic phosphate, the committed step in the de novo pyrimidine nucleotide biosynthesis pathway. The protein is Aspartate carbamoyltransferase catalytic subunit of Salinispora tropica (strain ATCC BAA-916 / DSM 44818 / JCM 13857 / NBRC 105044 / CNB-440).